Here is a 130-residue protein sequence, read N- to C-terminus: Small ribosomal subunit protein uS8 (130 aa).

The protein belongs to the universal ribosomal protein uS8 family. As to quaternary structure, part of the 30S ribosomal subunit. Contacts proteins S5 and S12.

In terms of biological role, one of the primary rRNA binding proteins, it binds directly to 16S rRNA central domain where it helps coordinate assembly of the platform of the 30S subunit. The polypeptide is Small ribosomal subunit protein uS8 (Mannheimia succiniciproducens (strain KCTC 0769BP / MBEL55E)).